The primary structure comprises 67 residues: Large ribosomal subunit protein bL32 (67 aa).

Positions 1–19 (MAVPKRKMSRANTRARRSQ) are enriched in basic residues. Residues 1–21 (MAVPKRKMSRANTRARRSQWK) form a disordered region.

Belongs to the bacterial ribosomal protein bL32 family.

In Micrococcus luteus (strain ATCC 4698 / DSM 20030 / JCM 1464 / CCM 169 / CCUG 5858 / IAM 1056 / NBRC 3333 / NCIMB 9278 / NCTC 2665 / VKM Ac-2230) (Micrococcus lysodeikticus), this protein is Large ribosomal subunit protein bL32.